The following is a 235-amino-acid chain: Segregation and condensation protein A (235 aa).

It belongs to the ScpA family. As to quaternary structure, component of a cohesin-like complex composed of ScpA, ScpB and the Smc homodimer, in which ScpA and ScpB bind to the head domain of Smc. The presence of the three proteins is required for the association of the complex with DNA.

The protein localises to the cytoplasm. Participates in chromosomal partition during cell division. May act via the formation of a condensin-like complex containing Smc and ScpB that pull DNA away from mid-cell into both cell halves. The sequence is that of Segregation and condensation protein A from Streptococcus equi subsp. equi (strain 4047).